Consider the following 407-residue polypeptide: Protein S-acyltransferase 8 (407 aa).

Transmembrane regions (helical) follow at residues 29-49 (SLPLTLLLIIVPVVLFCVFVA) and 62-82 (GYAIMVVAILFTIYVLILLFF). A DHHC domain is found at 136-186 (KYCDTCMLYRPPRCSHCSICNNCVERFDHHCPWVGQCIGLRNYRYFFMFVS). Cysteine 166 acts as the S-palmitoyl cysteine intermediate in catalysis. The next 2 membrane-spanning stretches (helical) occupy residues 181 to 201 (FFMFVSSSTLLCIYIFSMSAV) and 224 to 244 (AVVLMIYCFIALWFVGGLTAF). The interval 348–368 (AEDANNNQPHHTLDIDHERAG) is disordered. Residues 358 to 368 (HTLDIDHERAG) show a composition bias toward basic and acidic residues. Phosphoserine is present on serine 385.

Belongs to the DHHC palmitoyltransferase family. As to expression, expressed in flowers and pollen.

The protein localises to the cell membrane. The catalysed reaction is L-cysteinyl-[protein] + hexadecanoyl-CoA = S-hexadecanoyl-L-cysteinyl-[protein] + CoA. S-acyltransferase involved in protein lipid modification. The protein is Protein S-acyltransferase 8 (PAT08) of Arabidopsis thaliana (Mouse-ear cress).